Here is a 138-residue protein sequence, read N- to C-terminus: Large ribosomal subunit protein uL16 (138 aa).

The span at 1–13 shows a compositional bias: basic residues; the sequence is MLQPKRRKYRKEQ. Residues 1 to 24 form a disordered region; that stretch reads MLQPKRRKYRKEQKGRNTGKATRG.

The protein belongs to the universal ribosomal protein uL16 family. Part of the 50S ribosomal subunit.

In terms of biological role, binds 23S rRNA and is also seen to make contacts with the A and possibly P site tRNAs. The sequence is that of Large ribosomal subunit protein uL16 from Burkholderia ambifaria (strain ATCC BAA-244 / DSM 16087 / CCUG 44356 / LMG 19182 / AMMD) (Burkholderia cepacia (strain AMMD)).